The sequence spans 208 residues: Exosome complex component CSL4 homolog (208 aa).

As to quaternary structure, component of the RNA exosome complex. Ubiquitously expressed.

The protein resides in the nucleus. It localises to the nucleolus. It is found in the nucleoplasm. Non-catalytic component of the RNA exosome complex which has 3'-&gt;5' exoribonuclease activity and participates in a multitude of cellular RNA processing and degradation events. Involved in regulation of antisense ribosomal siRNA production. Involved in response to cold-warm shock. In Caenorhabditis elegans, this protein is Exosome complex component CSL4 homolog.